A 79-amino-acid polypeptide reads, in one-letter code: uncharacterized protein (79 aa).

The disordered stretch occupies residues 1 to 37 (MQLDVFSRMMFGDAAKPTEEKEEEQQEEVSQVSQTND).

This is an uncharacterized protein from Bacillus subtilis (strain 168).